Reading from the N-terminus, the 403-residue chain is Alkaline protease 1 (403 aa).

The first 21 residues, 1–21, serve as a signal peptide directing secretion; it reads MLSIKRTLLLLGAVLPAVFGA. Residues 22-125 constitute a propeptide that is removed on maturation; it reads PVQETRRAAQ…QIWYLDALTT (104 aa). The region spanning 36 to 120 is the Inhibitor I9 domain; it reads KYIVTFKPGT…HVEEDQIWYL (85 aa). The Peptidase S8 domain maps to 130–403; the sequence is PWGLGSISHK…PNKLAYNGNA (274 aa). Residues D162 and H193 each act as charge relay system in the active site. N-linked (GlcNAc...) asparagine glycosylation is found at N253 and N307. The active-site Charge relay system is S349. N-linked (GlcNAc...) asparagine glycosylation is present at N367.

Belongs to the peptidase S8 family.

The protein resides in the secreted. The catalysed reaction is Hydrolysis of proteins with broad specificity, and of Bz-Arg-OEt &gt; Ac-Tyr-OEt. Does not hydrolyze peptide amides.. Secreted alkaline protease that allows assimilation of proteinaceous substrates. Acts as a significant virulence factor in invasive aspergillosis. Involved in immune evasion from the human and mice complement systems during infection. Efficiently cleaves important components of the complement cascade such as such as C3, C4, C5, and C1q, as well as IgG, which leads to down-regulation of complement activation at the hyphal surface. The polypeptide is Alkaline protease 1 (alp1) (Aspergillus fumigatus (strain CBS 144.89 / FGSC A1163 / CEA10) (Neosartorya fumigata)).